The chain runs to 424 residues: MSLIVDVYAREILDSRGNPTVEVDVTLEDGTLGRAAVPSGASTGAYEAVELRDKDTARYFGKGVKTAVAFVNGEIAEALMGIDATDQVGIDSAMIELDGTPNKSRLGANAILGVSLAVAKAAAEATGQPLYRYVGGTSARVLPVPMMNIINGGEHADNPIDIQEFMIMPVSADSIAEAVRMGAEVFHTLKKELSAAGLSTGIGDEGGFAPNLSSTRDALDFVLKAIEKAGYTPGEDIYLALDCAATEYFEDGRYEMKGEGKTLTPEANVDYLEALVNDYPILSIEDGCSEDDWEGWALLTERLGDRVQLVGDDLFVTNPARLAEGIQKGCANSLLVKVNQIGTLTETLSAVDLAHRNRMTCVMSHRSGETEDATIADLAVATNCGQIKTGSLARSDRLAKYNQLIRIEDELGETAIYAGRSILR.

Gln-163 contacts (2R)-2-phosphoglycerate. The active-site Proton donor is Glu-205. Residues Asp-242, Glu-285, and Asp-312 each coordinate Mg(2+). Lys-337, Arg-366, Ser-367, and Lys-388 together coordinate (2R)-2-phosphoglycerate. Lys-337 (proton acceptor) is an active-site residue.

The protein belongs to the enolase family. The cofactor is Mg(2+).

It localises to the cytoplasm. It is found in the secreted. Its subcellular location is the cell surface. It catalyses the reaction (2R)-2-phosphoglycerate = phosphoenolpyruvate + H2O. The protein operates within carbohydrate degradation; glycolysis; pyruvate from D-glyceraldehyde 3-phosphate: step 4/5. Functionally, catalyzes the reversible conversion of 2-phosphoglycerate (2-PG) into phosphoenolpyruvate (PEP). It is essential for the degradation of carbohydrates via glycolysis. This Dinoroseobacter shibae (strain DSM 16493 / NCIMB 14021 / DFL 12) protein is Enolase.